Here is a 391-residue protein sequence, read N- to C-terminus: Putative 12-oxophytodienoate reductase 6 (391 aa).

Residues 42–44 (PMT), Ala-75, and Gln-117 each bind FMN. 189-192 (HGAN) contributes to the substrate binding site. The active-site Proton donor is Tyr-194. Arg-241 contributes to the FMN binding site. Arg-282 contacts substrate. FMN contacts are provided by residues Gly-312 and 333-334 (GR). A disordered region spans residues 372–391 (YPFLDEHHHDDDDDSNAPSA). Acidic residues predominate over residues 382–391 (DDDDSNAPSA).

Belongs to the NADH:flavin oxidoreductase/NADH oxidase family. The cofactor is FMN.

Its function is as follows. Putative oxophytodienoate reductase that may be involved in the biosynthesis or metabolism of oxylipin signaling molecules. The polypeptide is Putative 12-oxophytodienoate reductase 6 (OPR6) (Oryza sativa subsp. japonica (Rice)).